Consider the following 199-residue polypeptide: NAD(P)H dehydrogenase (quinone) (199 aa).

The region spanning 4 to 190 (ILVLYYSMYG…AIARFQGEHV (187 aa)) is the Flavodoxin-like domain. Residues 10 to 15 (SMYGHI) and 79 to 81 (TRF) each bind FMN. Y12 lines the NAD(+) pocket. W99 serves as a coordination point for substrate. FMN contacts are provided by residues 114 to 119 (STGTGG) and H134.

This sequence belongs to the WrbA family. The cofactor is FMN.

It catalyses the reaction a quinone + NADH + H(+) = a quinol + NAD(+). The catalysed reaction is a quinone + NADPH + H(+) = a quinol + NADP(+). The protein is NAD(P)H dehydrogenase (quinone) of Yersinia pseudotuberculosis serotype O:1b (strain IP 31758).